Consider the following 223-residue polypeptide: Ribose-5-phosphate isomerase A (223 aa).

Substrate is bound by residues 32-35 (TGST), 83-86 (DGAD), and 96-99 (KGGG). The Proton acceptor role is filled by Glu-105. Lys-123 serves as a coordination point for substrate.

It belongs to the ribose 5-phosphate isomerase family. Homodimer.

The enzyme catalyses aldehydo-D-ribose 5-phosphate = D-ribulose 5-phosphate. The protein operates within carbohydrate degradation; pentose phosphate pathway; D-ribose 5-phosphate from D-ribulose 5-phosphate (non-oxidative stage): step 1/1. Its function is as follows. Catalyzes the reversible conversion of ribose-5-phosphate to ribulose 5-phosphate. This Acinetobacter baumannii (strain ATCC 17978 / DSM 105126 / CIP 53.77 / LMG 1025 / NCDC KC755 / 5377) protein is Ribose-5-phosphate isomerase A.